The sequence spans 118 residues: Ribosome-binding factor A (118 aa).

This sequence belongs to the RbfA family. As to quaternary structure, monomer. Binds 30S ribosomal subunits, but not 50S ribosomal subunits or 70S ribosomes.

Its subcellular location is the cytoplasm. Functionally, one of several proteins that assist in the late maturation steps of the functional core of the 30S ribosomal subunit. Associates with free 30S ribosomal subunits (but not with 30S subunits that are part of 70S ribosomes or polysomes). Required for efficient processing of 16S rRNA. May interact with the 5'-terminal helix region of 16S rRNA. The protein is Ribosome-binding factor A of Streptococcus pyogenes serotype M1.